Consider the following 258-residue polypeptide: UPF0246 protein Pnec_1068 (258 aa).

It belongs to the UPF0246 family.

The chain is UPF0246 protein Pnec_1068 from Polynucleobacter necessarius subsp. necessarius (strain STIR1).